A 305-amino-acid polypeptide reads, in one-letter code: U6 small nuclear RNA (adenine-(43)-N(6))-methyltransferase (305 aa).

Positions 85, 110, 133, 164, and 186 each coordinate S-adenosyl-L-methionine. The interval Ser194–Gly217 is disordered.

The protein belongs to the methyltransferase superfamily. METTL16/RlmF family.

The enzyme catalyses adenosine in U6 snRNA + S-adenosyl-L-methionine = N(6)-methyladenosine in U6 snRNA + S-adenosyl-L-homocysteine + H(+). RNA N6-methyltransferase that mediates N6-methylation of adenine of U6 small nuclear RNA (U6 snRNA). The chain is U6 small nuclear RNA (adenine-(43)-N(6))-methyltransferase from Drosophila pseudoobscura pseudoobscura (Fruit fly).